We begin with the raw amino-acid sequence, 160 residues long: 6,7-dimethyl-8-ribityllumazine synthase (160 aa).

5-amino-6-(D-ribitylamino)uracil-binding positions include W28, 59–61 (ALE), and 81–83 (CVI). 86–87 (ET) provides a ligand contact to (2S)-2-hydroxy-3-oxobutyl phosphate. H89 (proton donor) is an active-site residue. Residue N114 coordinates 5-amino-6-(D-ribitylamino)uracil. R128 provides a ligand contact to (2S)-2-hydroxy-3-oxobutyl phosphate.

It belongs to the DMRL synthase family.

It catalyses the reaction (2S)-2-hydroxy-3-oxobutyl phosphate + 5-amino-6-(D-ribitylamino)uracil = 6,7-dimethyl-8-(1-D-ribityl)lumazine + phosphate + 2 H2O + H(+). The protein operates within cofactor biosynthesis; riboflavin biosynthesis; riboflavin from 2-hydroxy-3-oxobutyl phosphate and 5-amino-6-(D-ribitylamino)uracil: step 1/2. Its function is as follows. Catalyzes the formation of 6,7-dimethyl-8-ribityllumazine by condensation of 5-amino-6-(D-ribitylamino)uracil with 3,4-dihydroxy-2-butanone 4-phosphate. This is the penultimate step in the biosynthesis of riboflavin. This is 6,7-dimethyl-8-ribityllumazine synthase from Corynebacterium urealyticum (strain ATCC 43042 / DSM 7109).